The chain runs to 284 residues: Elongation factor Ts (284 aa).

Positions Thr80 to Val83 are involved in Mg(2+) ion dislocation from EF-Tu.

Belongs to the EF-Ts family.

Its subcellular location is the cytoplasm. Associates with the EF-Tu.GDP complex and induces the exchange of GDP to GTP. It remains bound to the aminoacyl-tRNA.EF-Tu.GTP complex up to the GTP hydrolysis stage on the ribosome. The chain is Elongation factor Ts from Neisseria gonorrhoeae (strain ATCC 700825 / FA 1090).